Here is a 152-residue protein sequence, read N- to C-terminus: SsrA-binding protein (152 aa).

The tract at residues 130-152 (HDKRQDLKQRQDKREMERAMKQR) is disordered. Basic and acidic residues predominate over residues 132–152 (KRQDLKQRQDKREMERAMKQR).

This sequence belongs to the SmpB family.

It is found in the cytoplasm. In terms of biological role, required for rescue of stalled ribosomes mediated by trans-translation. Binds to transfer-messenger RNA (tmRNA), required for stable association of tmRNA with ribosomes. tmRNA and SmpB together mimic tRNA shape, replacing the anticodon stem-loop with SmpB. tmRNA is encoded by the ssrA gene; the 2 termini fold to resemble tRNA(Ala) and it encodes a 'tag peptide', a short internal open reading frame. During trans-translation Ala-aminoacylated tmRNA acts like a tRNA, entering the A-site of stalled ribosomes, displacing the stalled mRNA. The ribosome then switches to translate the ORF on the tmRNA; the nascent peptide is terminated with the 'tag peptide' encoded by the tmRNA and targeted for degradation. The ribosome is freed to recommence translation, which seems to be the essential function of trans-translation. The protein is SsrA-binding protein of Thermosynechococcus vestitus (strain NIES-2133 / IAM M-273 / BP-1).